A 356-amino-acid chain; its full sequence is Replication factor C subunit 3 (356 aa).

Lys-20 is modified (N6-acetyllysine). Ser-125 bears the Phosphoserine mark.

Belongs to the activator 1 small subunits family. In terms of assembly, subunit of the RFC complex, an heteropentameric complex consisting of a large subunit RFC1 and four small subunits RFC2, RFC3, RFC4 and RFC5; the RFC complex interacts with PCNA. Forms an heterotetrameric complex with RFC2, RFC4 and RFC5; this complex has ATPase activity but is not stimulated by PCNA. The heterotetramer of subunits RFC2, RFC3, RFC4 and RFC5 interacts with RAD17. Interacts with CNTD1; this interaction facilitates crossover formation.

Its subcellular location is the nucleus. Its function is as follows. Subunit of the replication factor C (RFC) complex which acts during elongation of primed DNA templates by DNA polymerases delta and epsilon, and is necessary for ATP-dependent loading of proliferating cell nuclear antigen (PCNA) onto primed DNA. This Bos taurus (Bovine) protein is Replication factor C subunit 3 (RFC3).